A 414-amino-acid polypeptide reads, in one-letter code: Pre-mRNA-processing protein 45 (414 aa).

Disordered stretches follow at residues 128–159 (ESKR…DTPI) and 264–292 (RSKI…KKIK). Polar residues predominate over residues 135–146 (LQPSRQKNTSSK).

It belongs to the SNW family. As to quaternary structure, associated with the spliceosome.

Its subcellular location is the nucleus. Its function is as follows. Involved in pre-mRNA splicing. The polypeptide is Pre-mRNA-processing protein 45 (PRP45) (Candida glabrata (strain ATCC 2001 / BCRC 20586 / JCM 3761 / NBRC 0622 / NRRL Y-65 / CBS 138) (Yeast)).